Here is a 24-residue protein sequence, read N- to C-terminus: Waglerin-4 (24 aa).

Cys-11 and Cys-15 are oxidised to a cystine.

It belongs to the waglerin family. In terms of assembly, monomer. In terms of tissue distribution, expressed by the venom gland.

The protein localises to the secreted. Waglerin-2 selectively blocks the epsilon subunit of muscle nicotinic acetylcholine receptor (nAChR). Also has effects on rodent ionotropic GABA(A) receptors (GABR), since it potentiates I(GABA) in some neurons and depresses I(GABA) in others. In mice, it elicits tachypnea, ocular proptosis, rapid collapse and spasms, whereas no toxic effects on respiration and blood pressure are observed in rats. Its function is as follows. Waglerin-4 selectively blocks the epsilon subunit of muscle nicotinic acetylcholine receptor. It elicits tachypnea, ocular proptosis, rapid collapse and spasms in mice. It causes death by respiratory failure. This Tropidolaemus wagleri (Wagler's pit viper) protein is Waglerin-4.